A 1142-amino-acid polypeptide reads, in one-letter code: Envelopment polyprotein (1142 aa).

Residues 1-21 (MSKFCLCLSLLGVLLLQVCDT) form the signal peptide. The Lumenal portion of the chain corresponds to 22 to 489 (RSLLELKIEC…LCVPGIHGWS (468 aa)). 6 cysteine pairs are disulfide-bonded: C31/C156, C65/C162, C114/C133, C138/C143, C180/C190, and C215/C253. Residue N139 is glycosylated (N-linked (GlcNAc...) asparagine; by host). N-linked (GlcNAc...) asparagine; by host glycosylation occurs at N353. 4 disulfide bridges follow: C382-C441, C386-C395, C411-C430, and C458-C481. Residue N405 is glycosylated (N-linked (GlcNAc...) asparagine; by host). Residues 490–510 (TIALLATFCFGWLLIPIISLV) traverse the membrane as a helical segment. Residues 511–633 (SIKIMLLFAY…LSVFRYRSRC (123 aa)) are Cytoplasmic-facing. The segment at 522–539 (CSKYSNDSKFRLLIEKVK) is binding to the ribonucleoprotein. 2 consecutive CCHC-type zinc fingers follow at residues 551–571 (CEVCQQECEMAKELESHKKSC) and 576–597 (CPYCMNPTESTESALQAHFKVC). Binding to the ribonucleoprotein regions lie at residues 594-611 (FKVCKLTTRFQENLRKSL), 598-609 (KLTTRFQENLRK), and 617-631 (KRGCYRTLSVFRYRS). The ITAM domain occupies 617 to 640 (KRGCYRTLSVFRYRSRCFVGLVWC). Residues 621 to 624 (YRTL) carry the YxxL motif. A helical membrane pass occupies residues 634 to 654 (FVGLVWCILLVLELVIWAASA). Residues 655 to 1110 (DTVEIKTGWT…EWLMGILSGN (456 aa)) lie on the Lumenal side of the membrane. 8 cysteine pairs are disulfide-bonded: C741/C776, C745/C783, C757/C890, C771/C901, C786/C909, C812/C821, C829/C838, and C869/C873. The tract at residues 763–783 (YEFETGWGCNPGDCPGVGTGC) is fusion loop. An N-linked (GlcNAc...) asparagine; by host glycan is attached at N933. Intrachain disulfides connect C975–C1005, C998–C1050, C1015–C1020, C1051–C1056, and C1090–C1094. Residues 1111-1131 (WMVVAVLVVLLILSIFLFSLC) form a helical membrane-spanning segment. The binding to the ribonucleoprotein stretch occupies residues 1127–1142 (LFSLCCPRRVVHKKSS). The Cytoplasmic segment spans residues 1132–1142 (CPRRVVHKKSS).

It belongs to the hantavirus envelope glycoprotein family. As to quaternary structure, homodimer. Homotetramer; forms heterotetrameric Gn-Gc spikes in the pre-fusion conformation. Interacts (via C-terminus) with the nucleoprotein. Interacts with host TUFM; this interaction contributes to the virus-induced degradation of mitochondria by autophagy, which leads to degradation of host MAVS and inhibition of type I interferon (IFN) responses. Interacts with host MAP1LC3B; this interaction contributes to the virus-induced degradation of mitochondria by autophagy, which leads to degradation of host MAVS and inhibition of type I interferon (IFN) responses. Homodimer. Homotetramer; forms heterotetrameric Gn-Gc spikes in the pre-fusion conformation. Homotrimer; forms homotrimer in the post-fusion conformation at acidic pH. Interacts (via C-terminus) with the nucleoprotein. In terms of processing, envelope polyprotein precursor is quickly cleaved in vivo just after synthesis, presumably by host signal peptidase.

The protein resides in the virion membrane. It localises to the host cell surface. It is found in the host Golgi apparatus membrane. The protein localises to the host endoplasmic reticulum membrane. Its subcellular location is the host mitochondrion. Its function is as follows. Forms homotetramers with glycoprotein C at the surface of the virion. Attaches the virion to host cell receptors including integrin alpha5/ITGB1. This attachment induces virion internalization predominantly through clathrin-dependent endocytosis. Mediates the assembly and budding of infectious virus particles through its interaction with the nucleocapsid protein and the viral genome. May dysregulate normal immune and endothelial cell responses through an ITAM motif. Translocates to mitochondria, binds to host TUFM and recruits MAP1LC3B. These interactions induce mitochondrial autophagy and therefore destruction of host MAVS leading to inhibition of type I interferon (IFN) responses. Concomitant breakdown of glycoprotein N is apparently prevented by the nucleoprotein that may inhibit Gn-stimulated autophagosome-lysosome fusion. Interacts with the viral genomic RNA. Forms homotetramers with glycoprotein N at the surface of the virion. Attaches the virion to host cell receptors including integrin ITGAV/ITGB3. This attachment induces virion internalization predominantly through clathrin-dependent endocytosis. Class II fusion protein that promotes fusion of viral membrane with host endosomal membrane after endocytosis of the virion. In Microtus pennsylvanicus (Meadow vole), this protein is Envelopment polyprotein (GP).